A 185-amino-acid chain; its full sequence is Glycerol-3-phosphate acyltransferase 4 (185 aa).

A run of 6 helical transmembrane segments spans residues 1 to 21 (MPLL…AYLA), 47 to 67 (LGRG…SLAI), 69 to 89 (LALA…AAVL), 113 to 133 (LLIA…VLLF), 137 to 157 (VIAA…LYGL), and 158 to 178 (PGGV…THFI).

This sequence belongs to the PlsY family. As to quaternary structure, probably interacts with PlsX.

Its subcellular location is the cell membrane. The enzyme catalyses an acyl phosphate + sn-glycerol 3-phosphate = a 1-acyl-sn-glycero-3-phosphate + phosphate. Its pathway is lipid metabolism; phospholipid metabolism. In terms of biological role, catalyzes the transfer of an acyl group from acyl-phosphate (acyl-PO(4)) to glycerol-3-phosphate (G3P) to form lysophosphatidic acid (LPA). This enzyme utilizes acyl-phosphate as fatty acyl donor, but not acyl-CoA or acyl-ACP. The polypeptide is Glycerol-3-phosphate acyltransferase 4 (Dehalococcoides mccartyi (strain ATCC BAA-2266 / KCTC 15142 / 195) (Dehalococcoides ethenogenes (strain 195))).